A 712-amino-acid chain; its full sequence is Patatin-like phospholipase domain-containing protein NFIA_019760 (712 aa).

A compositionally biased stretch (basic and acidic residues) spans 1–13 (MTSDEKSATRDIY). Positions 1–21 (MTSDEKSATRDIYDPNTLPDY) are disordered. The chain crosses the membrane as a helical span at residues 85-105 (WPFLFTVFAWITVLGFAYTLT). Residues 275–466 (LCLSGGATFA…RTDIPIKALN (192 aa)) enclose the PNPLA domain. The GXSXG motif lies at 306-310 (GTSGG). Residue serine 308 is the Nucleophile of the active site. The active-site Proton acceptor is aspartate 453. Positions 628-687 (RRRQDRAEEHADRMVERLDQSFPERQSDYKDESHYTEVSDSLSATSSRPHTPDARRSSMF) are disordered. 2 stretches are compositionally biased toward basic and acidic residues: residues 632–646 (DRAE…ERLD) and 652–664 (RQSD…HYTE). Residues 665–676 (VSDSLSATSSRP) are compositionally biased toward polar residues. The span at 677–687 (HTPDARRSSMF) shows a compositional bias: basic and acidic residues.

The protein belongs to the PLPL family.

The protein localises to the membrane. Probable lipid hydrolase. The chain is Patatin-like phospholipase domain-containing protein NFIA_019760 from Neosartorya fischeri (strain ATCC 1020 / DSM 3700 / CBS 544.65 / FGSC A1164 / JCM 1740 / NRRL 181 / WB 181) (Aspergillus fischerianus).